Here is a 316-residue protein sequence, read N- to C-terminus: Biotin synthase (316 aa).

The region spanning 36-264 is the Radical SAM core domain; it reads TEIQISTLLS…ASRVRLAAGR (229 aa). The [4Fe-4S] cluster site is built by Cys51, Cys55, and Cys58. [2Fe-2S] cluster is bound by residues Cys96, Cys127, Cys187, and Arg259.

The protein belongs to the radical SAM superfamily. Biotin synthase family. As to quaternary structure, homodimer. Requires [4Fe-4S] cluster as cofactor. The cofactor is [2Fe-2S] cluster.

The enzyme catalyses (4R,5S)-dethiobiotin + (sulfur carrier)-SH + 2 reduced [2Fe-2S]-[ferredoxin] + 2 S-adenosyl-L-methionine = (sulfur carrier)-H + biotin + 2 5'-deoxyadenosine + 2 L-methionine + 2 oxidized [2Fe-2S]-[ferredoxin]. It participates in cofactor biosynthesis; biotin biosynthesis; biotin from 7,8-diaminononanoate: step 2/2. Its function is as follows. Catalyzes the conversion of dethiobiotin (DTB) to biotin by the insertion of a sulfur atom into dethiobiotin via a radical-based mechanism. This is Biotin synthase from Gluconacetobacter diazotrophicus (strain ATCC 49037 / DSM 5601 / CCUG 37298 / CIP 103539 / LMG 7603 / PAl5).